We begin with the raw amino-acid sequence, 55 residues long: uncharacterized protein (55 aa).

A run of 2 helical transmembrane segments spans residues 5-25 and 26-46; these read LISI…MMHM and LPLY…LYRL.

Its subcellular location is the cell membrane. This is an uncharacterized protein from Bacillus subtilis (strain 168).